The chain runs to 229 residues: 2-C-methyl-D-erythritol 4-phosphate cytidylyltransferase (229 aa).

It belongs to the IspD/TarI cytidylyltransferase family. IspD subfamily.

The enzyme catalyses 2-C-methyl-D-erythritol 4-phosphate + CTP + H(+) = 4-CDP-2-C-methyl-D-erythritol + diphosphate. The protein operates within isoprenoid biosynthesis; isopentenyl diphosphate biosynthesis via DXP pathway; isopentenyl diphosphate from 1-deoxy-D-xylulose 5-phosphate: step 2/6. In terms of biological role, catalyzes the formation of 4-diphosphocytidyl-2-C-methyl-D-erythritol from CTP and 2-C-methyl-D-erythritol 4-phosphate (MEP). This is 2-C-methyl-D-erythritol 4-phosphate cytidylyltransferase from Bacillus pumilus (strain SAFR-032).